We begin with the raw amino-acid sequence, 123 residues long: MARISGIDLPKEKRVEIGLTYIYGIGLPTSQEILEATGVNPDTRVKDLSEEEVNAIRDYVNKNVKVEGDLRREIKLNIKRLVEIGSYRGIRHRRNLPVRGQKTKTNARTRKGPKRAIGGKKKK.

The tract at residues 93–123 (RRNLPVRGQKTKTNARTRKGPKRAIGGKKKK) is disordered.

It belongs to the universal ribosomal protein uS13 family. As to quaternary structure, part of the 30S ribosomal subunit. Forms a loose heterodimer with protein S19. Forms two bridges to the 50S subunit in the 70S ribosome.

Located at the top of the head of the 30S subunit, it contacts several helices of the 16S rRNA. In the 70S ribosome it contacts the 23S rRNA (bridge B1a) and protein L5 of the 50S subunit (bridge B1b), connecting the 2 subunits; these bridges are implicated in subunit movement. Contacts the tRNAs in the A and P-sites. The protein is Small ribosomal subunit protein uS13 of Clostridium botulinum (strain Loch Maree / Type A3).